The following is a 356-amino-acid chain: Histidinol-phosphate aminotransferase 1 (356 aa).

Residue K213 is modified to N6-(pyridoxal phosphate)lysine.

This sequence belongs to the class-II pyridoxal-phosphate-dependent aminotransferase family. Histidinol-phosphate aminotransferase subfamily. As to quaternary structure, homodimer. The cofactor is pyridoxal 5'-phosphate.

It catalyses the reaction L-histidinol phosphate + 2-oxoglutarate = 3-(imidazol-4-yl)-2-oxopropyl phosphate + L-glutamate. The protein operates within amino-acid biosynthesis; L-histidine biosynthesis; L-histidine from 5-phospho-alpha-D-ribose 1-diphosphate: step 7/9. The polypeptide is Histidinol-phosphate aminotransferase 1 (Burkholderia pseudomallei (strain K96243)).